The primary structure comprises 512 residues: Probable capsid protein 4 (512 aa).

It belongs to the NCLDV major capsid protein family.

The protein resides in the virion. The protein is Probable capsid protein 4 of Acanthamoeba polyphaga mimivirus (APMV).